A 237-amino-acid polypeptide reads, in one-letter code: Ribonuclease PH (237 aa).

Residues R86 and 124-126 (GTR) each bind phosphate.

It belongs to the RNase PH family. Homohexameric ring arranged as a trimer of dimers.

The enzyme catalyses tRNA(n+1) + phosphate = tRNA(n) + a ribonucleoside 5'-diphosphate. In terms of biological role, phosphorolytic 3'-5' exoribonuclease that plays an important role in tRNA 3'-end maturation. Removes nucleotide residues following the 3'-CCA terminus of tRNAs; can also add nucleotides to the ends of RNA molecules by using nucleoside diphosphates as substrates, but this may not be physiologically important. Probably plays a role in initiation of 16S rRNA degradation (leading to ribosome degradation) during starvation. This Roseobacter denitrificans (strain ATCC 33942 / OCh 114) (Erythrobacter sp. (strain OCh 114)) protein is Ribonuclease PH.